A 160-amino-acid chain; its full sequence is Twist-related protein 2 (160 aa).

The interval Met-1–Glu-63 is disordered. The span at Lys-27–Lys-37 shows a compositional bias: basic residues. Residues Ser-66–Leu-117 enclose the bHLH domain.

In terms of assembly, efficient DNA binding requires dimerization with another bHLH protein. Forms a heterodimer with TCF3/E12. Also interacts with MEF2C. Expressed at low levels in sclerotome and dermatome of somites, and in limb buds at 10.5 dpc. Accumulates predominantly in dermatome, prevertebrae and derivatives of branchial arches by 13 dpc. Also expressed near surface of embryo and in chondrogenic cells. In adult, expressed at low levels in skin, bladder, uterus, aorta and heart.

It is found in the nucleus. The protein resides in the cytoplasm. Binds to the E-box consensus sequence 5'-CANNTG-3' as a heterodimer and inhibits transcriptional activation by MYOD1, MYOG, MEF2A and MEF2C. Also represses expression of pro-inflammatory cytokines such as TNFA and IL1B. Involved in postnatal glycogen storage and energy metabolism. Inhibits the premature or ectopic differentiation of preosteoblast cells during osteogenesis, possibly by changing the internal signal transduction response of osteoblasts to external growth factors. The chain is Twist-related protein 2 (Twist2) from Mus musculus (Mouse).